Reading from the N-terminus, the 468-residue chain is Nuclear receptor ROR-alpha A (468 aa).

Positions 15-90 (IIPCKICGDK…VGMSRDAVKF (76 aa)) form a DNA-binding region, nuclear receptor. 2 NR C4-type zinc fingers span residues 18–38 (CKIC…CEGC) and 54–73 (CPRQ…CQHC). Disordered regions lie at residues 101–129 (LYAE…PLTP) and 142–163 (HDDL…DSGV). Positions 217–455 (ELEHLAQNIS…AHFPPLYKEL (239 aa)) constitute an NR LBD domain. Residues 444–455 (VRAHFPPLYKEL) form an AF-2 region.

Belongs to the nuclear hormone receptor family. NR1 subfamily. Expressed in the brain, in cerebellar-like structures, including Purkinje cells.

Its subcellular location is the nucleus. Nuclear receptor that binds DNA as a monomer to ROR response elements (RORE). Required for proper cerebellum development. This Danio rerio (Zebrafish) protein is Nuclear receptor ROR-alpha A (roraa).